The sequence spans 699 residues: Catalase-peroxidase (699 aa).

Residues 72–200 constitute a cross-link (tryptophyl-tyrosyl-methioninium (Trp-Tyr) (with M-226)); sequence WHSAGTYRIA…LAAVMMGLIY (129 aa). Residue His-73 is the Proton acceptor of the active site. Residues 200 to 226 constitute a cross-link (tryptophyl-tyrosyl-methioninium (Tyr-Met) (with W-72)); the sequence is YVNPEGVDGNPDPLKTAKDMRVTFARM. Heme b is bound at residue His-241.

It belongs to the peroxidase family. Peroxidase/catalase subfamily. In terms of assembly, homodimer or homotetramer. It depends on heme b as a cofactor. Formation of the three residue Trp-Tyr-Met cross-link is important for the catalase, but not the peroxidase activity of the enzyme.

It catalyses the reaction H2O2 + AH2 = A + 2 H2O. It carries out the reaction 2 H2O2 = O2 + 2 H2O. Bifunctional enzyme with both catalase and broad-spectrum peroxidase activity. This Aeromonas salmonicida (strain A449) protein is Catalase-peroxidase.